The chain runs to 2551 residues: Piezo-type mechanosensitive ion channel component (2551 aa).

The next 8 membrane-spanning stretches (helical) occupy residues 5 to 25 (YACM…AALM), 27 to 47 (PVGI…VPLA), 56 to 76 (VTAF…GHIT), 106 to 126 (FIDL…LVFA), 204 to 226 (IHFE…FAAV), 231 to 250 (VPGG…WATC), 256 to 276 (GFAL…LSIV), and 320 to 340 (LSLD…ALAL). The tract at residues 354-375 (STRKARTPQPLESGSSVAPSVT) is disordered. The span at 363 to 375 (PLESGSSVAPSVT) shows a compositional bias: polar residues. 9 helical membrane passes run 395 to 415 (TTTS…GFIY), 424 to 444 (ILMM…LLLS), 463 to 483 (PFIV…GMDL), 516 to 536 (VPLI…RQFF), 548 to 568 (LADF…SYLI), 588 to 608 (LLVR…AITG), 611 to 631 (MTGF…VFQS), 639 to 659 (IMYG…ILIY), and 695 to 715 (FLHL…VHYF). The span at 731-741 (GSAQQKPTETT) shows a compositional bias: polar residues. A disordered region spans residues 731 to 772 (GSAQQKPTETTALEPAPSKRRGSAGSLRKSQGPSAEAAPGAT). 12 consecutive transmembrane segments (helical) span residues 819–839 (IAAF…FVGF), 857–877 (LISF…IEYL), 910–930 (LMSL…HAVI), 973–993 (LNFG…VSTI), 994–1014 (TYRQ…LLLL), 1022–1042 (IWGV…IVLV), 1071–1091 (GALH…LVIL), 1152–1172 (VLCG…TNIA), 1174–1194 (LLAL…SDFY), 1198–1218 (IHTI…NILI), 1239–1259 (WLVH…QIML), and 1275–1295 (ITHQ…IFQL). Disordered regions lie at residues 1426-1521 (NITE…AKDS) and 1592-1658 (ESDE…PQQQ). The segment covering 1430-1448 (SEMKMQRRKTLYDKSKDAP) has biased composition (basic and acidic residues). Residues 1466 to 1477 (ATASSSASPAPT) are compositionally biased toward low complexity. Positions 1497-1511 (QTSKETSDSKSKMEV) are enriched in basic and acidic residues. 2 stretches are compositionally biased toward low complexity: residues 1621 to 1634 (PTST…TTTP) and 1644 to 1658 (LQPL…PQQQ). Transmembrane regions (helical) follow at residues 1718–1738 (ISSW…VVFI), 1741–1761 (VVNA…WGTL), 1770–1790 (FWVT…IFQF), and 1817–1837 (AHYA…RYLL). The interval 1854–1876 (FTKPTASIDERDDSDNLSQPDSR) is disordered. Helical transmembrane passes span 1937-1957 (ALMF…FTAF), 1979-1999 (IPFL…RALY), 2008-2028 (IIFH…VVPA), 2033-2053 (TFNS…YMLL), 2075-2095 (FSMV…LYEL), 2151-2171 (IMGG…LCLF), and 2431-2451 (TFSF…VLLA). Residues 2522–2551 (EYVDDDGDTDSIPSRMSVRRPEQLQPQQPQ) are disordered.

The protein belongs to the PIEZO (TC 1.A.75) family.

Its subcellular location is the cell membrane. In terms of biological role, component of a mechanosensitive channel required for rapidly adapting mechanically activated (MA) currents. Plays a major role in nociception (response to strong or painful touch). Required for maintaining the mechanosensitivity of tarsal bristle mechanosensors. During their evalulation of potential egg-laying sites, females determine the softest substrate for their eggs first by making a coarse evaluation of substrate hardness using mechanosensitive channels nan and Piezo in the leg tarsal bristles, followed by a much finer assessment using nan, iav and Tmc mechanosensitive channels on the labellum. Acts in the nompC- and nan-expressing neurons of the female leg tarsals, to sense the mild differences in egg-laying substrate stiffness. In Drosophila melanogaster (Fruit fly), this protein is Piezo-type mechanosensitive ion channel component.